A 294-amino-acid polypeptide reads, in one-letter code: MFKGSIPALITPFTDNGSVDEKAFAAHVEWQIAEGSNGLVPVGTTGESPTLSHDEHKRVVELCIEVAAKRVPVIAGAGSNNTDEAIELALHAQEAGADALLVVTPYYNKPTQKGLFAHFSAVAEAVKLPIVIYNIPPRSVVDMSPETMGALVKAHKNIIGVKDATGKLDRVSEQRISCGKDFVQLSGEDGTALGFNAHGGVGCISVTANVAPRLCSEFQAAMLAGDYAKALEYQDRLMPLHRAIFMEPGVCGTKYALSKTRGGNRRVRSPLMSTLEPATEAAIDAALKHAGLMN.

Thr45 contacts pyruvate. Tyr133 (proton donor/acceptor) is an active-site residue. Residue Lys162 is the Schiff-base intermediate with substrate of the active site. Ile204 contributes to the pyruvate binding site.

Belongs to the DapA family. As to quaternary structure, homotetramer; dimer of dimers.

It localises to the cytoplasm. It carries out the reaction L-aspartate 4-semialdehyde + pyruvate = (2S,4S)-4-hydroxy-2,3,4,5-tetrahydrodipicolinate + H2O + H(+). Its pathway is amino-acid biosynthesis; L-lysine biosynthesis via DAP pathway; (S)-tetrahydrodipicolinate from L-aspartate: step 3/4. With respect to regulation, is allosterically regulated by the feedback inhibitor (S)-lysine. In terms of biological role, catalyzes the condensation of (S)-aspartate-beta-semialdehyde [(S)-ASA] and pyruvate to 4-hydroxy-tetrahydrodipicolinate (HTPA). In Agrobacterium fabrum (strain C58 / ATCC 33970) (Agrobacterium tumefaciens (strain C58)), this protein is 4-hydroxy-tetrahydrodipicolinate synthase.